The chain runs to 339 residues: Serine racemase (339 aa).

2 residues coordinate ATP: S43 and K63. Residue K68 is the Proton acceptor of the active site. Residue K68 is modified to N6-(pyridoxal phosphate)lysine. Position 90 (T90) interacts with Ca(2+). S93 (proton acceptor) is an active-site residue. N95 provides a ligand contact to pyridoxal 5'-phosphate. C122 carries the S-nitrosocysteine modification. Position 130 (Y130) interacts with ATP. Mg(2+) is bound at residue D187. G195, G196, and G197 together coordinate pyridoxal 5'-phosphate. E219, A223, and D225 together coordinate Ca(2+). Mg(2+) is bound by residues E219, A223, and D225. The Mn(2+) site is built by E219, A223, and D225. K287 serves as a coordination point for ATP. S323 provides a ligand contact to pyridoxal 5'-phosphate. Residue N326 participates in ATP binding.

This sequence belongs to the serine/threonine dehydratase family. Mg(2+) serves as cofactor. Mn(2+) is required as a cofactor. It depends on Ca(2+) as a cofactor. The cofactor is pyridoxal 5'-phosphate.

It catalyses the reaction L-serine = D-serine. The enzyme catalyses L-serine = pyruvate + NH4(+). The catalysed reaction is D-serine = pyruvate + NH4(+). Its function is as follows. Catalyzes the synthesis of D-serine from L-serine. Has dehydratase activity towards both L-serine and D-serine. The protein is Serine racemase of Oryza sativa subsp. indica (Rice).